The chain runs to 788 residues: Endonuclease MutS2 (788 aa).

332-339 (GPNTGGKT) is an ATP binding site. One can recognise a Smr domain in the interval 713–788 (VDLRGMDAEE…GTGVTVVELK (76 aa)).

The protein belongs to the DNA mismatch repair MutS family. MutS2 subfamily. In terms of assembly, homodimer. Binds to stalled ribosomes, contacting rRNA.

Endonuclease that is involved in the suppression of homologous recombination and thus may have a key role in the control of bacterial genetic diversity. Functionally, acts as a ribosome collision sensor, splitting the ribosome into its 2 subunits. Detects stalled/collided 70S ribosomes which it binds and splits by an ATP-hydrolysis driven conformational change. Acts upstream of the ribosome quality control system (RQC), a ribosome-associated complex that mediates the extraction of incompletely synthesized nascent chains from stalled ribosomes and their subsequent degradation. Probably generates substrates for RQC. This is Endonuclease MutS2 from Clostridium botulinum (strain Kyoto / Type A2).